The sequence spans 467 residues: Repressible acid phosphatase (467 aa).

A signal peptide spans 1 to 17 (MFKSVVYSILAASLANA). Histidine 75 functions as the Nucleophile in the catalytic mechanism. Asparagine 97, asparagine 103, asparagine 162, asparagine 192, asparagine 250, and asparagine 315 each carry an N-linked (GlcNAc...) asparagine glycan. Residue aspartate 338 is the Proton donor of the active site. N-linked (GlcNAc...) asparagine glycans are attached at residues asparagine 356, asparagine 390, asparagine 439, asparagine 445, asparagine 456, and asparagine 461.

It belongs to the histidine acid phosphatase family. Post-translationally, glycosylated during secretion across the membrane.

The protein resides in the secreted. The enzyme catalyses a phosphate monoester + H2O = an alcohol + phosphate. Its function is as follows. Partially mediates extracellular nucleotide derived phosphate hydrolysis along with NPP1 and NPP2. The chain is Repressible acid phosphatase (PHO5) from Saccharomyces cerevisiae (strain ATCC 204508 / S288c) (Baker's yeast).